A 248-amino-acid polypeptide reads, in one-letter code: Adenosylcobinamide-GDP ribazoletransferase (248 aa).

7 consecutive transmembrane segments (helical) span residues 32-52, 60-80, 103-123, 134-154, 170-190, 195-215, and 227-247; these read FPLV…IGMV, ALLV…DGLA, AVGS…WIAL, WIVS…SVMT, AGGW…VLVM, LPIV…GMLA, and LGAS…LLLF.

This sequence belongs to the CobS family. The cofactor is Mg(2+).

It is found in the cell inner membrane. The enzyme catalyses alpha-ribazole + adenosylcob(III)inamide-GDP = adenosylcob(III)alamin + GMP + H(+). The catalysed reaction is alpha-ribazole 5'-phosphate + adenosylcob(III)inamide-GDP = adenosylcob(III)alamin 5'-phosphate + GMP + H(+). Its pathway is cofactor biosynthesis; adenosylcobalamin biosynthesis; adenosylcobalamin from cob(II)yrinate a,c-diamide: step 7/7. In terms of biological role, joins adenosylcobinamide-GDP and alpha-ribazole to generate adenosylcobalamin (Ado-cobalamin). Also synthesizes adenosylcobalamin 5'-phosphate from adenosylcobinamide-GDP and alpha-ribazole 5'-phosphate. The sequence is that of Adenosylcobinamide-GDP ribazoletransferase from Prosthecochloris aestuarii (strain DSM 271 / SK 413).